The chain runs to 454 residues: MSHNDTIVAQATPPGRGGVGILRISGLKARDVAQEVLGKLPKPRHADYLPFKDVDGSALDQGIALWFPGPNSFTGEDVLELQGHGGPVILDLLLKRILTLPGVRIARPGEFSERAFLNDKLDLAQAEAIADLIDASSEQAARSALNSLQGAFSARVNHLVEALTHLRIYVEAAIDFPDEEIDFLSDGKIEAQLNGVIADLDAVRTEARQGSLLREGMKVVIAGRPNAGKSSLLNALAGREAAIVTDIAGTTRDVLREHIHIDGMPLHIIDTAGLRDASDEVERIGIERAWQEIEQADRVLFMVDGTTTDAVDPADIWPDFIARLPKNLPITVVRNKADITGETLGISEVNGHSLVRLSARTGEGVDVLRNHLKQSMGFDTNMEGGFLARRRHLQALAEAAEHLEQGKAQLLGAWAGELLAEELRLAQQSLSEITGEFTSDDLLGRIFSSFCIGK.

The (6S)-5-formyl-5,6,7,8-tetrahydrofolate site is built by Arg-23, Glu-80, and Lys-120. The region spanning 216–377 (GMKVVIAGRP…LRNHLKQSMG (162 aa)) is the TrmE-type G domain. Residue Asn-226 coordinates K(+). GTP is bound by residues 226 to 231 (NAGKSS), 245 to 251 (TDIAGTT), 270 to 273 (DTAG), 335 to 338 (NKAD), and 358 to 360 (SAR). Mg(2+) is bound at residue Ser-230. The K(+) site is built by Thr-245, Ile-247, and Thr-250. Thr-251 is a Mg(2+) binding site. Lys-454 lines the (6S)-5-formyl-5,6,7,8-tetrahydrofolate pocket.

This sequence belongs to the TRAFAC class TrmE-Era-EngA-EngB-Septin-like GTPase superfamily. TrmE GTPase family. In terms of assembly, homodimer. Heterotetramer of two MnmE and two MnmG subunits. K(+) serves as cofactor.

The protein localises to the cytoplasm. Its function is as follows. Exhibits a very high intrinsic GTPase hydrolysis rate. Involved in the addition of a carboxymethylaminomethyl (cmnm) group at the wobble position (U34) of certain tRNAs, forming tRNA-cmnm(5)s(2)U34. The polypeptide is tRNA modification GTPase MnmE (Salmonella gallinarum (strain 287/91 / NCTC 13346)).